The chain runs to 552 residues: Nucleoside-diphosphatase mig-23 (552 aa).

Residues M1–R6 lie on the Cytoplasmic side of the membrane. A helical transmembrane segment spans residues F7–V27. The Lumenal segment spans residues E28 to E489. The active-site Proton acceptor is E174. 2 N-linked (GlcNAc...) asparagine glycosylation sites follow: N190 and N284. Residues S490–A510 form a helical membrane-spanning segment. Residues K511–A552 are Cytoplasmic-facing.

This sequence belongs to the GDA1/CD39 NTPase family. Expressed in body wall muscles.

Its subcellular location is the golgi apparatus membrane. It catalyses the reaction a ribonucleoside 5'-diphosphate + H2O = a ribonucleoside 5'-phosphate + phosphate + H(+). Its function is as follows. Seems to be able to hydrolyze ADP, UDP and GDP. Supports mig-17 glycosylation and surface expression, which is required for proper migration of distal tip cells during gonad morphogenesis. In Caenorhabditis elegans, this protein is Nucleoside-diphosphatase mig-23 (mig-23).